Reading from the N-terminus, the 220-residue chain is MPGAALPSLLAWLAVLLLGRARPADACSCSPIHPQQAFCNADVVIRAKRVSAKEVDSGNDIYGNPIKRIQYEVKQIKMFKGPDQDIEFIYTAPSTEVCGQPLDTGGKKEYLIAGKSEGDGKMHITLCDLVATWDSVSPTQKKSLNQRYQMGCECKISRCLSIPCFVSSSDECLWTDWAMEKIVGGRQAKHYACIKRSDGSCAWYRGMAPPKQEFLDIEDP.

Residues 1 to 26 form the signal peptide; it reads MPGAALPSLLAWLAVLLLGRARPADA. C27 is a binding site for Zn(2+). Involved in metalloproteinase-binding regions lie at residues 27–30 and 95–96; these read CSCS and TE. 6 disulfide bridges follow: C27/C98, C29/C127, C39/C152, C154/C201, C159/C164, and C172/C193. Residues 27–152 form the NTR domain; the sequence is CSCSPIHPQQ…SLNQRYQMGC (126 aa).

It belongs to the protease inhibitor I35 (TIMP) family. Post-translationally, the activity of TIMP2 is dependent on the presence of disulfide bonds.

The protein resides in the secreted. Its function is as follows. Complexes with metalloproteinases (such as collagenases) and irreversibly inactivates them by binding to their catalytic zinc cofactor. The protein is Metalloproteinase inhibitor 2 (TIMP2) of Gallus gallus (Chicken).